The chain runs to 358 residues: Phosphoserine aminotransferase (358 aa).

An L-glutamate-binding site is contributed by Arg-41. Residues 75–76 (AS), Trp-100, Thr-148, Asp-167, and Gln-190 contribute to the pyridoxal 5'-phosphate site. At Lys-191 the chain carries N6-(pyridoxal phosphate)lysine. 233–234 (NT) is a binding site for pyridoxal 5'-phosphate.

The protein belongs to the class-V pyridoxal-phosphate-dependent aminotransferase family. SerC subfamily. In terms of assembly, homodimer. Requires pyridoxal 5'-phosphate as cofactor.

The protein resides in the cytoplasm. The catalysed reaction is O-phospho-L-serine + 2-oxoglutarate = 3-phosphooxypyruvate + L-glutamate. It catalyses the reaction 4-(phosphooxy)-L-threonine + 2-oxoglutarate = (R)-3-hydroxy-2-oxo-4-phosphooxybutanoate + L-glutamate. Its pathway is amino-acid biosynthesis; L-serine biosynthesis; L-serine from 3-phospho-D-glycerate: step 2/3. It participates in cofactor biosynthesis; pyridoxine 5'-phosphate biosynthesis; pyridoxine 5'-phosphate from D-erythrose 4-phosphate: step 3/5. Functionally, catalyzes the reversible conversion of 3-phosphohydroxypyruvate to phosphoserine and of 3-hydroxy-2-oxo-4-phosphonooxybutanoate to phosphohydroxythreonine. The chain is Phosphoserine aminotransferase from Campylobacter jejuni subsp. doylei (strain ATCC BAA-1458 / RM4099 / 269.97).